The following is a 154-amino-acid chain: AP-1 complex subunit sigma-3 (154 aa).

The protein belongs to the adaptor complexes small subunit family. As to quaternary structure, adaptor protein complex 1 (AP-1) is a heterotetramer composed of two large adaptins (gamma-type subunit AP1G1 and beta-type subunit AP1B1), a medium adaptin (mu-type subunit AP1M1 or AP1M2) and a small adaptin (sigma-type subunit AP1S1 or AP1S2 or AP1S3). In terms of tissue distribution, widely expressed.

It is found in the golgi apparatus. It localises to the cytoplasmic vesicle membrane. Its subcellular location is the membrane. The protein localises to the clathrin-coated pit. Subunit of clathrin-associated adaptor protein complex 1 that plays a role in protein sorting in the late-Golgi/trans-Golgi network (TGN) and/or endosomes. The AP complexes mediate both the recruitment of clathrin to membranes and the recognition of sorting signals within the cytosolic tails of transmembrane cargo molecules. Involved in TLR3 trafficking. In Homo sapiens (Human), this protein is AP-1 complex subunit sigma-3 (AP1S3).